A 436-amino-acid polypeptide reads, in one-letter code: Testican-3 (436 aa).

The signal sequence occupies residues 1 to 22 (MLKVSAVLCVCAAAWCSQSLAA). Cystine bridges form between Cys90/Cys101, Cys95/Cys111, Cys139/Cys169, Cys142/Cys162, Cys151/Cys183, Cys317/Cys341, Cys352/Cys359, and Cys361/Cys380. The 53-residue stretch at 133–185 (GPILSTCKQCPVVYPSPVCGSDGHTYSFQCKLEYQACVLGKQISVKCEGHCPC) folds into the Kazal-like domain. Residues 314–380 (DPPCQTELSN…GSRINGVADC (67 aa)) enclose the Thyroglobulin type-1 domain. O-linked (Xyl...) (glycosaminoglycan) serine glycosylation is found at Ser387 and Ser392. The disordered stretch occupies residues 393–436 (GDFHEWTDDEDDEDDIMNDEDEIEDDDEDEGDDDDGGDDHDGYI). Acidic residues predominate over residues 399 to 430 (TDDEDDEDDIMNDEDEIEDDDEDEGDDDDGGD).

In terms of processing, contains chondroitin sulfate and heparan sulfate O-linked oligosaccharides. Expressed in brain.

The protein resides in the secreted. It is found in the extracellular space. It localises to the extracellular matrix. May participate in diverse steps of neurogenesis. Inhibits the processing of pro-matrix metalloproteinase 2 (MMP-2) by MT1-MMP and MT3-MMP. May interfere with tumor invasion. This is Testican-3 (SPOCK3) from Pongo abelii (Sumatran orangutan).